Reading from the N-terminus, the 340-residue chain is Phospho-N-acetylmuramoyl-pentapeptide-transferase (340 aa).

Transmembrane regions (helical) follow at residues 22 to 42 (VVVPFGLSALGSALLGSLLIP), 69 to 89 (TMGGISFLPVGLLVAGIWSGW), 95 to 115 (AVALLTLAYSFVGWLDDWLVI), 129 to 149 (LLLQVGVALGFCVYLAWQGIP), 156 to 176 (GIGTLSLGWLFWPLALFVLVG), 186 to 206 (GMDGLAAGVVAILLIGLGLLH), 209 to 229 (PELSVLAFTLSGACLGFLVHN), 235 to 257 (LFMGDTGSLGLGGALAGLALLGD), and 316 to 336 (VVGSFYGVTALLVGLGWAWWH).

Belongs to the glycosyltransferase 4 family. MraY subfamily. Mg(2+) is required as a cofactor.

It localises to the cell inner membrane. It catalyses the reaction UDP-N-acetyl-alpha-D-muramoyl-L-alanyl-gamma-D-glutamyl-meso-2,6-diaminopimeloyl-D-alanyl-D-alanine + di-trans,octa-cis-undecaprenyl phosphate = di-trans,octa-cis-undecaprenyl diphospho-N-acetyl-alpha-D-muramoyl-L-alanyl-D-glutamyl-meso-2,6-diaminopimeloyl-D-alanyl-D-alanine + UMP. It functions in the pathway cell wall biogenesis; peptidoglycan biosynthesis. Catalyzes the initial step of the lipid cycle reactions in the biosynthesis of the cell wall peptidoglycan: transfers peptidoglycan precursor phospho-MurNAc-pentapeptide from UDP-MurNAc-pentapeptide onto the lipid carrier undecaprenyl phosphate, yielding undecaprenyl-pyrophosphoryl-MurNAc-pentapeptide, known as lipid I. The chain is Phospho-N-acetylmuramoyl-pentapeptide-transferase from Synechococcus sp. (strain JA-2-3B'a(2-13)) (Cyanobacteria bacterium Yellowstone B-Prime).